The sequence spans 688 residues: SRSF protein kinase 2 (688 aa).

The segment at 1-65 (MSVNSEKSSS…EQEDPADYCK (65 aa)) is disordered. Positions 22–43 (LVPPPPPPPPPPPPPLPDPTPP) are enriched in pro residues. Positions 44-61 (EPEEEILGSDDEEQEDPA) are enriched in acidic residues. A Phosphoserine modification is found at Ser52. Residues 81-684 (YHVIRKLGWG…ASAGECLRHP (604 aa)) form the Protein kinase domain. ATP is bound by residues 87 to 95 (LGWGHFSTV) and Lys110. The active-site Proton acceptor is Asp214. 3 disordered regions span residues 239–277 (WQKA…KKQK), 329–444 (GLEE…GRHK), and 469–501 (SVLS…TGDL). A compositionally biased stretch (basic residues) spans 265 to 277 (SKNKKKKLKKKQK). At Ser380 the chain carries Phosphoserine. The segment covering 397–421 (QLDDEDDDEEDCPNPEEYNLDEPNA) has biased composition (acidic residues). Over residues 423 to 433 (SDYTYSSSYEQ) the composition is skewed to polar residues. Residue Ser475 is modified to Phosphoserine. Position 478 is a phosphothreonine (Thr478). Ser484, Ser486, and Ser490 each carry phosphoserine. Thr492 carries the post-translational modification Phosphothreonine; by PKB/AKT1. Phosphoserine occurs at positions 494 and 497. The residue at position 588 (Ser588) is a Phosphoserine; by CK2.

This sequence belongs to the protein kinase superfamily. CMGC Ser/Thr protein kinase family. In terms of assembly, associates with U4/U6-U5 tri-small nuclear ribonucleoproteins (U4/U6-U5 tri-snRNPs). Interacts with PKB/AKT1 in a phosphorylation-dependent manner. The phosphorylated form (by PKB/AKT1) interacts with YWHAB and YWHAE. Interaction with YWHAB suppresses its cleavage by caspases and inhibits the release of its N-terminal pro-apoptotic fragment. Interacts with SFN. Interacts with ACIN1. Interacts with POLR2A/RNA polymerase II; the interaction occurs during the co-transcriptional formation of inappropriate R-loops. Mg(2+) is required as a cofactor. Phosphorylation at Thr-492 by PKB/AKT1 enhances its stimulatory activity in triggering cyclin-D1 (CCND1) expression and promoting apoptosis in neurons, which can be blocked by YWHAB. It also enhances its protein kinase activity toward ACIN1 and SRSF2, promotes its nuclear translocation and prevents its proteolytic cleavage. Post-translationally, proteolytically cleaved at Asp-139 and Asp-403 by caspase-3 during apoptotic cell death. Cleavage at Asp-139 which is the major site of cleavage, produces a small N-terminal fragment that translocates into nucleus and promotes VP16-induced apoptosis. Highly expressed in brain, moderately expressed in heart and skeletal muscle and at low levels in lung, liver, and kidney.

It is found in the cytoplasm. The protein localises to the nucleus. The protein resides in the nucleoplasm. It localises to the nucleus speckle. Its subcellular location is the chromosome. It carries out the reaction L-seryl-[protein] + ATP = O-phospho-L-seryl-[protein] + ADP + H(+). It catalyses the reaction L-threonyl-[protein] + ATP = O-phospho-L-threonyl-[protein] + ADP + H(+). With respect to regulation, activated by phosphorylation on Ser-52 and Ser-588. Serine/arginine-rich protein-specific kinase which specifically phosphorylates its substrates at serine residues located in regions rich in arginine/serine dipeptides, known as RS domains and is involved in the phosphorylation of SR splicing factors and the regulation of splicing. Promotes neuronal apoptosis by up-regulating cyclin-D1 (CCND1) expression. This is done by the phosphorylation of SRSF2, leading to the suppression of p53/TP53 phosphorylation thereby relieving the repressive effect of p53/TP53 on cyclin-D1 (CCND1) expression. Phosphorylates ACIN1, and redistributes it from the nuclear speckles to the nucleoplasm, resulting in cyclin A1 but not cyclin A2 up-regulation. Plays an essential role in spliceosomal B complex formation via the phosphorylation of DDX23/PRP28. Probably by phosphorylating DDX23, leads to the suppression of incorrect R-loops formed during transcription; R-loops are composed of a DNA:RNA hybrid and the associated non-template single-stranded DNA. Can mediate hepatitis B virus (HBV) core protein phosphorylation. Plays a negative role in the regulation of HBV replication through a mechanism not involving the phosphorylation of the core protein but by reducing the packaging efficiency of the pregenomic RNA (pgRNA) without affecting the formation of the viral core particles. This Homo sapiens (Human) protein is SRSF protein kinase 2.